The sequence spans 128 residues: Small ribosomal subunit protein uS12 (128 aa).

A 3-methylthioaspartic acid modification is found at aspartate 89.

This sequence belongs to the universal ribosomal protein uS12 family. In terms of assembly, part of the 30S ribosomal subunit. Contacts proteins S8 and S17. May interact with IF1 in the 30S initiation complex.

In terms of biological role, with S4 and S5 plays an important role in translational accuracy. Functionally, interacts with and stabilizes bases of the 16S rRNA that are involved in tRNA selection in the A site and with the mRNA backbone. Located at the interface of the 30S and 50S subunits, it traverses the body of the 30S subunit contacting proteins on the other side and probably holding the rRNA structure together. The combined cluster of proteins S8, S12 and S17 appears to hold together the shoulder and platform of the 30S subunit. The protein is Small ribosomal subunit protein uS12 of Campylobacter jejuni subsp. doylei (strain ATCC BAA-1458 / RM4099 / 269.97).